An 834-amino-acid chain; its full sequence is U-box domain-containing protein 33 (834 aa).

The disordered stretch occupies residues 232–308; the sequence is FSTPESEHQH…SPSSFPDGVD (77 aa). 2 stretches are compositionally biased toward polar residues: residues 243 to 273 and 284 to 293; these read SRVQ…GSLN and SEVTGSATVM. Residues 334–462 adopt a coiled-coil conformation; it reads LRRQKAEKNA…SHAETSTLQL (129 aa). The 264-residue stretch at 481–744 folds into the Protein kinase domain; that stretch reads FDSTLKIGEG…EVWRVLEPMR (264 aa). ATP-binding positions include 487–495 and lysine 508; that span reads IGEGGYGSI. The active-site Proton acceptor is aspartate 603. In terms of domain architecture, U-box spans 762–834; it reads IAPPYFICPI…AIQEWLQHHL (73 aa).

Belongs to the protein kinase superfamily. Ser/Thr protein kinase family.

It carries out the reaction L-seryl-[protein] + ATP = O-phospho-L-seryl-[protein] + ADP + H(+). The enzyme catalyses L-threonyl-[protein] + ATP = O-phospho-L-threonyl-[protein] + ADP + H(+). It catalyses the reaction S-ubiquitinyl-[E2 ubiquitin-conjugating enzyme]-L-cysteine + [acceptor protein]-L-lysine = [E2 ubiquitin-conjugating enzyme]-L-cysteine + N(6)-ubiquitinyl-[acceptor protein]-L-lysine.. It participates in protein modification; protein ubiquitination. In terms of biological role, functions as an E3 ubiquitin ligase. This chain is U-box domain-containing protein 33 (PUB33), found in Arabidopsis thaliana (Mouse-ear cress).